The chain runs to 519 residues: Baeyer-Villiger monooxygenase (519 aa).

Residues Glu-41, 49–52 (TWRD), Asp-61, Tyr-67, and Val-110 contribute to the FAD site. Residue 59 to 61 (ACD) coordinates NADP(+). Residues 183 to 189 (TGASAIQ), 206 to 207 (RT), and 292 to 293 (KR) each bind NADP(+). Met-399 serves as a coordination point for FAD. The interval 499–519 (GAKAAEADTGADTGADAEVSA) is disordered.

Belongs to the FAD-binding monooxygenase family. Requires FAD as cofactor.

Functionally, catalyzes a Baeyer-Villiger oxidation reaction, i.e. the insertion of an oxygen atom into a carbon-carbon bond adjacent to a carbonyl, which converts ketones to esters or lactones using NADPH and/or NADH as an electron donor. Thus, can convert bicyclo[3.2.0]hept-2-en-6-one into the oxidative lactone products 2-oxabicyclo[3.3.0]oct-6-en-3-one and 3-oxabicyclo[3.3.0]oct-6-en-2-one. Is also able to catalyze the sulfoxidation of methyl phenyl sulfide (thioanisole). This chain is Baeyer-Villiger monooxygenase, found in Streptomyces coelicolor (strain ATCC BAA-471 / A3(2) / M145).